Reading from the N-terminus, the 74-residue chain is Exodeoxyribonuclease 7 small subunit (74 aa).

Belongs to the XseB family. As to quaternary structure, heterooligomer composed of large and small subunits.

It is found in the cytoplasm. The catalysed reaction is Exonucleolytic cleavage in either 5'- to 3'- or 3'- to 5'-direction to yield nucleoside 5'-phosphates.. Functionally, bidirectionally degrades single-stranded DNA into large acid-insoluble oligonucleotides, which are then degraded further into small acid-soluble oligonucleotides. The sequence is that of Exodeoxyribonuclease 7 small subunit from Bdellovibrio bacteriovorus (strain ATCC 15356 / DSM 50701 / NCIMB 9529 / HD100).